The primary structure comprises 153 residues: Ribosome maturation factor RimP (153 aa).

The protein belongs to the RimP family.

The protein resides in the cytoplasm. Functionally, required for maturation of 30S ribosomal subunits. This Psychromonas ingrahamii (strain DSM 17664 / CCUG 51855 / 37) protein is Ribosome maturation factor RimP.